Reading from the N-terminus, the 292-residue chain is uncharacterized protein (292 aa).

The HTH lysR-type domain maps to 1-58; sequence MEWEQLEYFQTLARMQHVTKAAKSLSITQPALSRSIARLENHLGVPLFDRQGRSISLN. Residues 18–37 constitute a DNA-binding region (H-T-H motif); the sequence is VTKAAKSLSITQPALSRSIA.

Belongs to the LysR transcriptional regulatory family.

This is an uncharacterized protein from Bacillus subtilis (strain 168).